Reading from the N-terminus, the 212-residue chain is MTQVIEEAVKKVLEESKPRNFTQSIDVVITINDLDINKPENRLDEEVLLPNGRGKDVKIAFIAEGELAYQAEQAGADLVINKEKLEELGKNRPEAKKLANSYDFFVAQTDLMPTVGRFLGPVLGPRKKMPKPIPASANPETILGRLRSTIKIRVKDQPIIQSIVGSEDMTEAQVAENIDAIMDVLDRNLEKGSKQIKAMYLKTTMGPVTRVI.

Belongs to the universal ribosomal protein uL1 family. Part of the 50S ribosomal subunit.

In terms of biological role, binds directly to 23S rRNA. Probably involved in E site tRNA release. Functionally, protein L1 is also a translational repressor protein, it controls the translation of its operon by binding to its mRNA. The polypeptide is Large ribosomal subunit protein uL1 (Methanosphaera stadtmanae (strain ATCC 43021 / DSM 3091 / JCM 11832 / MCB-3)).